We begin with the raw amino-acid sequence, 149 residues long: D-aminoacyl-tRNA deacylase (149 aa).

The short motif at 139 to 140 (GP) is the Gly-cisPro motif, important for rejection of L-amino acids element.

This sequence belongs to the DTD family. In terms of assembly, homodimer.

The protein localises to the cytoplasm. The enzyme catalyses glycyl-tRNA(Ala) + H2O = tRNA(Ala) + glycine + H(+). It catalyses the reaction a D-aminoacyl-tRNA + H2O = a tRNA + a D-alpha-amino acid + H(+). In terms of biological role, an aminoacyl-tRNA editing enzyme that deacylates mischarged D-aminoacyl-tRNAs. Also deacylates mischarged glycyl-tRNA(Ala), protecting cells against glycine mischarging by AlaRS. Acts via tRNA-based rather than protein-based catalysis; rejects L-amino acids rather than detecting D-amino acids in the active site. By recycling D-aminoacyl-tRNA to D-amino acids and free tRNA molecules, this enzyme counteracts the toxicity associated with the formation of D-aminoacyl-tRNA entities in vivo and helps enforce protein L-homochirality. The protein is D-aminoacyl-tRNA deacylase (DTD1) of Candida glabrata (strain ATCC 2001 / BCRC 20586 / JCM 3761 / NBRC 0622 / NRRL Y-65 / CBS 138) (Yeast).